The sequence spans 123 residues: UPF0102 protein Psyr_4114 (123 aa).

Belongs to the UPF0102 family.

This is UPF0102 protein Psyr_4114 from Pseudomonas syringae pv. syringae (strain B728a).